A 416-amino-acid chain; its full sequence is CinA-like protein (416 aa).

It belongs to the CinA family.

The protein is CinA-like protein of Rippkaea orientalis (strain PCC 8801 / RF-1) (Cyanothece sp. (strain PCC 8801)).